We begin with the raw amino-acid sequence, 143 residues long: MTIRHDSITAELALRLVVPGGAPVPVAATVRYEPADPYAISIGFRTGADEVVEWTFARQLLSDGVRRPAGDGDVQVWPAAQSGGRIVCLSLSSPSGHALFEMPRSEVLAFLRRTYSAVPLGGESDIIDLDAELALLIWGGPER.

It belongs to the SsgA family. As to quaternary structure, interacts with SsgA. Interacts with FtsZ (via N-terminus).

Its subcellular location is the cell septum. Functionally, involved in sporulation-specific cell division. Required for early stages of sporulation. Important in the process of growth cessation prior to sporulation-specific cell division. Recruits cell division protein FtsZ to the future septum sites and tethers the contractile ring structure (Z ring) to the cytoplasmic membrane during sporulation. Stimulates polymerization and filament length of FtsZ in vitro. The sequence is that of Sporulation-specific cell division protein SsgB from Frankia casuarinae (strain DSM 45818 / CECT 9043 / HFP020203 / CcI3).